The primary structure comprises 230 residues: MSEIKDVIVQGLWKNNSALVQLLGMCPLLAVTSTATNALGLGLATTLVLTLTNLTISALRRWTPAEIRIPIYVMIIASVVSAVQMLINAYAFGLYQSLGIFIPLIVTNCIVVGRAEAFAAKKGPALSALDGFSIGMGATGAMFVLGSMREIIGNGTLFDGADGLLGDWAKVLRVEIFHTDSPFLLAMLPPGAFIGLGLMLAVKYLIDEKMKKRRAEAVAAELPSGETGNV.

The next 6 membrane-spanning stretches (helical) occupy residues 18-38 (ALVQ…ATNA), 39-59 (LGLG…ISAL), 63-83 (TPAE…VSAV), 86-106 (LINA…PLIV), 125-145 (ALSA…MFVL), and 182-202 (PFLL…MLAV).

Belongs to the NqrDE/RnfAE family. The complex is composed of six subunits: RnfA, RnfB, RnfC, RnfD, RnfE and RnfG.

The protein resides in the cell inner membrane. Part of a membrane-bound complex that couples electron transfer with translocation of ions across the membrane. This Citrobacter koseri (strain ATCC BAA-895 / CDC 4225-83 / SGSC4696) protein is Ion-translocating oxidoreductase complex subunit E.